The following is a 276-amino-acid chain: Short-chain dehydrogenase/reductase ATR10 (276 aa).

Positions 29, 51, 78, and 105 each coordinate NADP(+). S161 (proton donor) is an active-site residue. NADP(+)-binding residues include K185 and T214. The Lowers pKa of active site Tyr role is filled by K185.

It belongs to the short-chain dehydrogenases/reductases (SDR) family.

It participates in mycotoxin biosynthesis. Functionally, short-chain dehydrogenase/reductase; part of the core atranone cluster (CAC) which products are predicted to catalyze most or all steps of mycotoxin atranone synthesis, starting from geranylgeranyl pyrophosphate (GGPP). The initial cyclization of GGPP to dolabellane is probably performed by the terpene cyclase ATR13. The Baeyer-Villiger oxidation near the end of the atranone synthesis, which converts atranones D and E to atranones F and G is predicted to be catalyzed by the monooxygenase ATR8. Of the CAC's other predicted gene products, the reducing PKS ATR6 might synthesize a polyketide chain. This polyketide is probably transferred onto the atranone backbone by the polyketide transferase ATR5. Other predicted CAC products include 4 oxygenases (ATR2, ATR3, ATR4, and ATR14), 3 short-chain reductases (ATR7, ATR9, and ATR10), and a methyltransferase (ATR12). These may all be involved in the various steps of atranone biosynthesis, although their specific roles must await experimental determination. The polypeptide is Short-chain dehydrogenase/reductase ATR10 (Stachybotrys chlorohalonatus (strain IBT 40285)).